The primary structure comprises 155 residues: Snaclec agkicetin-C subunit alpha (155 aa).

Positions 1–23 (MGRFIFVSFGLLVVFLSLSGTAA) are cleaved as a signal peptide. Intrachain disulfides connect C25–C36, C53–C149, and C124–C141. One can recognise a C-type lectin domain in the interval 32-150 (YIRFCYQPFK…CGLKHVFMCK (119 aa)).

This sequence belongs to the snaclec family. As to quaternary structure, heterodimer of subunits alpha and beta; disulfide-linked. As to expression, expressed by the venom gland.

It localises to the secreted. Functionally, is a potent glycoprotein Ibalpha (GP1BA) antagonist. Concentration-dependently inhibits botrocetin-, ristocetin- and low dose thrombin-induced platelet aggregation. Inhibits platelet adhesion only through inhibiting the vWF interaction with GP1BA, but has minimal effect on other platelet receptors, such as alpha-IIb/beta-3 (ITGA2B/ITGB3) or alpha-2/beta-1 (ITGA2/ITGB1). Causes an instant severe thrombocytopenia in rats and is not lethal to mice. The chain is Snaclec agkicetin-C subunit alpha from Deinagkistrodon acutus (Hundred-pace snake).